The chain runs to 151 residues: Large-conductance mechanosensitive channel (151 aa).

2 consecutive transmembrane segments (helical) span residues 12-32 (GNIV…ALVT) and 71-91 (VLLS…FLVV). The tract at residues 122–151 (AQTNGDSPGRHGGRGTPSPTDGPLASTESQ) is disordered.

Belongs to the MscL family. As to quaternary structure, homopentamer.

It is found in the cell membrane. Its function is as follows. Channel that opens in response to stretch forces in the membrane lipid bilayer. May participate in the regulation of osmotic pressure changes within the cell. This chain is Large-conductance mechanosensitive channel, found in Mycobacterium bovis (strain BCG / Pasteur 1173P2).